The primary structure comprises 331 residues: C-type lectin domain family 4 member K (331 aa).

The Cytoplasmic segment spans residues 1–41 (MPEAEMKEEAPEAHFTVDKQNISLWPREPPPKQDLSPVLRK). The chain crosses the membrane as a helical; Signal-anchor for type II membrane protein span at residues 42–62 (PLCICVAFTCLALVLVTSIVL). Over 63–331 (QAVFYPRLMG…CKRPYVQTTE (269 aa)) the chain is Extracellular. N-linked (GlcNAc...) asparagine glycans are attached at residues N90 and N116. A coiled-coil region spans residues 106–197 (DDAEVQMQIV…LKQQSDILEM (92 aa)). One can recognise a C-type lectin domain in the interval 205–323 (FSGNFYYFSR…CDNTFLFICK (119 aa)). 2 cysteine pairs are disulfide-bonded: C226–C322 and C298–C314.

Homotrimer. In terms of tissue distribution, expressed by Langerhans cells. Expressed in dendritic cells and by scattered cells in lymph nodes and spleen. Also detected in some non-lymphoid tissues such as lung, liver and heart.

It is found in the membrane. Functionally, calcium-dependent lectin displaying mannose-binding specificity. Induces the formation of Birbeck granules (BGs); is a potent regulator of membrane superimposition and zippering. Binds to sulfated as well as mannosylated glycans, keratan sulfate (KS) and beta-glucans. Facilitates uptake of antigens and is involved in the routing and/or processing of antigen for presentation to T cells. This Mus musculus (Mouse) protein is C-type lectin domain family 4 member K (Cd207).